The sequence spans 594 residues: Laccase-2 (594 aa).

The N-terminal stretch at 1-20 (MGGIIKLSFLFCSLISLVNS) is a signal peptide. An N-linked (GlcNAc...) asparagine glycan is attached at Asn-67. Plastocyanin-like domains are found at residues 70–183 (EALA…HSPN) and 195–357 (DRIV…RYTG). Residues His-117 and His-119 each contribute to the Cu cation site. A glycan (N-linked (GlcNAc...) asparagine) is linked at Asn-124. Cys-138 and Cys-578 are joined by a disulfide. Residues His-162 and His-164 each coordinate Cu cation. N-linked (GlcNAc...) asparagine glycans are attached at residues Asn-242, Asn-286, Asn-320, Asn-358, Asn-397, Asn-430, Asn-452, and Asn-458. The region spanning 466 to 563 (PVNIIINNLD…KMAVVVVQPE (98 aa)) is the Plastocyanin-like 3 domain. Cu cation is bound by residues His-480, His-483, and His-485. Residue Asn-508 is glycosylated (N-linked (GlcNAc...) asparagine). 4 residues coordinate Cu cation: His-543, Cys-544, His-545, and His-549.

It belongs to the multicopper oxidase family. It depends on Cu cation as a cofactor.

It localises to the secreted. It is found in the cell wall. The enzyme catalyses 4 hydroquinone + O2 = 4 benzosemiquinone + 2 H2O. Its function is as follows. Laccase that catalyzes the oxidation of certain aromatic compounds, including L-dopa, to quinones, which then polymerize to melanin. Able to oxidize a wide variety of aromatic diphenol and diamino groups in the ortho, meta, and para positions but not monophenolic groups such as in phenol, tyramine, or tyrosine. Plays an important role in virulence. Plays a role in dissemination to extrapulmonary sites but is not involved in pulmonary growth or in elicitation of cellular immune responses in the lung. In Cryptococcus neoformans var. grubii serotype A (strain H99 / ATCC 208821 / CBS 10515 / FGSC 9487) (Filobasidiella neoformans var. grubii), this protein is Laccase-2 (LAC2).